The sequence spans 252 residues: Ribosomal RNA small subunit methyltransferase A (252 aa).

Residues N11, L13, G38, E60, D82, and N99 each coordinate S-adenosyl-L-methionine.

It belongs to the class I-like SAM-binding methyltransferase superfamily. rRNA adenine N(6)-methyltransferase family. RsmA subfamily.

It localises to the cytoplasm. It carries out the reaction adenosine(1518)/adenosine(1519) in 16S rRNA + 4 S-adenosyl-L-methionine = N(6)-dimethyladenosine(1518)/N(6)-dimethyladenosine(1519) in 16S rRNA + 4 S-adenosyl-L-homocysteine + 4 H(+). In terms of biological role, specifically dimethylates two adjacent adenosines (A1518 and A1519) in the loop of a conserved hairpin near the 3'-end of 16S rRNA in the 30S particle. May play a critical role in biogenesis of 30S subunits. The sequence is that of Ribosomal RNA small subunit methyltransferase A from Hydrogenobaculum sp. (strain Y04AAS1).